The primary structure comprises 240 residues: Ribosomal RNA small subunit methyltransferase G (240 aa).

S-adenosyl-L-methionine contacts are provided by residues glycine 79, phenylalanine 84, 130 to 131 (AE), and arginine 149.

The protein belongs to the methyltransferase superfamily. RNA methyltransferase RsmG family.

Its subcellular location is the cytoplasm. Specifically methylates the N7 position of a guanine in 16S rRNA. The protein is Ribosomal RNA small subunit methyltransferase G of Lactobacillus acidophilus (strain ATCC 700396 / NCK56 / N2 / NCFM).